A 90-amino-acid polypeptide reads, in one-letter code: Probable Fe(2+)-trafficking protein (90 aa).

The protein belongs to the Fe(2+)-trafficking protein family.

In terms of biological role, could be a mediator in iron transactions between iron acquisition and iron-requiring processes, such as synthesis and/or repair of Fe-S clusters in biosynthetic enzymes. This chain is Probable Fe(2+)-trafficking protein, found in Halorhodospira halophila (strain DSM 244 / SL1) (Ectothiorhodospira halophila (strain DSM 244 / SL1)).